The chain runs to 678 residues: Pescadillo homolog (678 aa).

A disordered region spans residues 265–289 (PQQQTKTNNTTKKSKSTTAAAAATT). Low complexity predominate over residues 269 to 289 (TKTNNTTKKSKSTTAAAAATT). A BRCT domain is found at 352–442 (DVTTLFKGFH…LLLPYSEYTI (91 aa)). 2 disordered regions span residues 485–601 (TNAE…EDTK) and 626–678 (ATAN…KQKK). Acidic residues predominate over residues 505-518 (SDGESDDEDDEDLE). Basic and acidic residues predominate over residues 519–531 (HLETRYTEELRKE). The span at 541 to 574 (VDDDDEEEEDGEEDGEEEEEEEDGEEESESESES) shows a compositional bias: acidic residues. Residues 581 to 640 (VLTKKQRDELNKQKQAEEDTKLAELMIRKKDKWIYNKVKETNQQRATANQTLLEKRNKVE) adopt a coiled-coil conformation. Basic and acidic residues-rich tracts occupy residues 585-601 (KQRDELNKQKQAEEDTK) and 633-643 (LEKRNKVESGK). Residues 649 to 678 (VKVAPQPKKPAPLVKKSQQKQQQASKKQKK) are compositionally biased toward low complexity.

It belongs to the pescadillo family.

It is found in the nucleus. Its subcellular location is the nucleolus. The protein localises to the nucleoplasm. Required for maturation of ribosomal RNAs and formation of the large ribosomal subunit. This is Pescadillo homolog from Dictyostelium discoideum (Social amoeba).